Consider the following 542-residue polypeptide: Apolipoprotein N-acyltransferase (542 aa).

A run of 6 helical transmembrane segments spans residues Val24–Ala44, Val54–Leu74, Phe85–Val105, Ala116–Leu136, Phe160–Val180, and Gly190–Leu210. In terms of domain architecture, CN hydrolase spans Leu220–Leu499. Glu264 acts as the Proton acceptor in catalysis. Lys349 is an active-site residue. The active-site Nucleophile is Cys404. The chain crosses the membrane as a helical span at residues Leu509–Phe529.

It belongs to the CN hydrolase family. Apolipoprotein N-acyltransferase subfamily.

It localises to the cell inner membrane. It catalyses the reaction N-terminal S-1,2-diacyl-sn-glyceryl-L-cysteinyl-[lipoprotein] + a glycerophospholipid = N-acyl-S-1,2-diacyl-sn-glyceryl-L-cysteinyl-[lipoprotein] + a 2-acyl-sn-glycero-3-phospholipid + H(+). It functions in the pathway protein modification; lipoprotein biosynthesis (N-acyl transfer). Its function is as follows. Catalyzes the phospholipid dependent N-acylation of the N-terminal cysteine of apolipoprotein, the last step in lipoprotein maturation. This is Apolipoprotein N-acyltransferase from Chlamydia trachomatis serovar D (strain ATCC VR-885 / DSM 19411 / UW-3/Cx).